A 124-amino-acid chain; its full sequence is Small ribosomal subunit protein uS12 (124 aa).

The segment at 1 to 24 (MPTISQLVRKGRAKITKKSKSAAL) is disordered. Basic residues predominate over residues 9–20 (RKGRAKITKKSK). Asp89 carries the 3-methylthioaspartic acid modification. The segment at 105 to 124 (AGVEGRTQRRSKYGAKRPKK) is disordered. The segment covering 112 to 124 (QRRSKYGAKRPKK) has biased composition (basic residues).

This sequence belongs to the universal ribosomal protein uS12 family. In terms of assembly, part of the 30S ribosomal subunit. Contacts proteins S8 and S17. May interact with IF1 in the 30S initiation complex.

Its function is as follows. With S4 and S5 plays an important role in translational accuracy. In terms of biological role, interacts with and stabilizes bases of the 16S rRNA that are involved in tRNA selection in the A site and with the mRNA backbone. Located at the interface of the 30S and 50S subunits, it traverses the body of the 30S subunit contacting proteins on the other side and probably holding the rRNA structure together. The combined cluster of proteins S8, S12 and S17 appears to hold together the shoulder and platform of the 30S subunit. This chain is Small ribosomal subunit protein uS12, found in Christiangramia forsetii (strain DSM 17595 / CGMCC 1.15422 / KT0803) (Gramella forsetii).